We begin with the raw amino-acid sequence, 474 residues long: PTS system N-acetylmuramic acid-specific EIIBC component (474 aa).

A PTS EIIB type-1 domain is found at 1–89 (MAKEISSELL…SELLGEAPVQ (89 aa)). Residues 1–123 (MAKEISSELL…LAKFATIFTP (123 aa)) are Cytoplasmic-facing. Cysteine 29 functions as the Phosphocysteine intermediate; for EIIB activity in the catalytic mechanism. The 360-residue stretch at 115–474 (AKFATIFTPL…LFGCRNVNLD (360 aa)) folds into the PTS EIIC type-1 domain. A helical membrane pass occupies residues 124–144 (LIPGFIAAGLLLGIATLIATV). The Periplasmic portion of the chain corresponds to 145–157 (MHVPADAQGTLPD). The helical transmembrane segment at 158 to 178 (ALNFMKVFSKGLFTFLVILVG) threads the bilayer. Residues 179–180 (YN) are Cytoplasmic-facing. Residues 181-201 (AAQAFGGTGVNGAIIAALFLL) traverse the membrane as a helical segment. Topologically, residues 202-217 (GYNPAATTGYYAGFHD) are periplasmic. Residues 218 to 238 (FFGLPIDPRGNIIGVLIAAWA) traverse the membrane as a helical segment. Topologically, residues 239-260 (CARIEGMVRRFMPDDLDMLLTS) are cytoplasmic. A helical transmembrane segment spans residues 261 to 281 (LITLLITATLAYLIIMPLGGW). The Periplasmic segment spans residues 282-301 (LFEGMSWLFMHLNSNPFGCA). A helical transmembrane segment spans residues 302-322 (VLAGLFLIAVVFGVHQGFIPV). The Cytoplasmic segment spans residues 323-334 (YLALMDSQGFNS). The helical transmembrane segment at 335–355 (LFPILSMAGAGQVGAALALYW) threads the bilayer. The Periplasmic segment spans residues 356–368 (RAQPHSALRSQVR). The chain crosses the membrane as a helical span at residues 369 to 389 (GAIIPGLLGVGEPLIYGVTLP). The Cytoplasmic segment spans residues 390–393 (RMKP). Residues 394–414 (FVTACLGGAAGGLFIGLIAWW) form a helical membrane-spanning segment. Residues 415-440 (GLPMGLNSAFGPSGLVALPLMTSAQG) lie on the Periplasmic side of the membrane. A helical membrane pass occupies residues 441 to 461 (ILPAMAVYAGGILVAWVCGFI). Residues 462-474 (FTTLFGCRNVNLD) are Cytoplasmic-facing.

It is found in the cell inner membrane. It carries out the reaction N-acetyl-beta-D-muramate(out) + N(pros)-phospho-L-histidyl-[protein] = N-acetyl-beta-D-muramate 6-phosphate(in) + L-histidyl-[protein]. In terms of biological role, the phosphoenolpyruvate-dependent sugar phosphotransferase system (sugar PTS), a major carbohydrate active transport system, catalyzes the phosphorylation of incoming sugar substrates concomitantly with their translocation across the cell membrane. This system is involved in N-acetylmuramic acid (MurNAc) transport, yielding cytoplasmic MurNAc-6-P. Is responsible for growth on MurNAc as the sole source of carbon and energy. Is also able to take up anhydro-N-acetylmuramic acid (anhMurNAc), but cannot phosphorylate the carbon 6, probably because of the 1,6-anhydro ring. The chain is PTS system N-acetylmuramic acid-specific EIIBC component (murP) from Escherichia coli (strain K12).